Reading from the N-terminus, the 461-residue chain is Xyloglucan 6-xylosyltransferase 2 (461 aa).

Topologically, residues 1 to 20 are cytoplasmic; it reads MIERCLGAYRCRRIQRALRQ. Residues 21 to 40 traverse the membrane as a helical; Signal-anchor for type II membrane protein segment; it reads LKVTILCLLLTVVVLRSTIG. Residues 41-461 are Lumenal-facing; that stretch reads AGKFGTPEQD…KAVKVQTNQV (421 aa). The tract at residues 74-95 is disordered; it reads QTGGDSSSGDGGGNSGGSNNYE. N-linked (GlcNAc...) asparagine glycosylation is present at N432.

The protein belongs to the glycosyltransferase 34 family. Homodimer. Interacts with XXT1 and XXT5. Interacts with FUT1 and XLT2.

It localises to the golgi apparatus membrane. It carries out the reaction Transfers an alpha-D-xylosyl residue from UDP-D-xylose to a glucose residue in xyloglucan, forming an alpha-(1-&gt;6)-D-xylosyl-D-glucose linkage.. Its function is as follows. Xylosyltransferase specific to UDP-D-xylose that accepts both cellopentaose and cellohexaose as substrates, with a better use of cellohexaose, to produce xyloglucan. Adds preferentially the first xylosyl residue to the fourth glucosyl residue from the reducing end of both acceptors. Transfer one xylose mainly to the second glucose residue from the non-reducing end. The acceptor should have a minimum of four glucose residues. Associates with other xyloglucan-synthesizing enzymes to form multiprotein complexes for xyloglucan synthesis in the Golgi. The polypeptide is Xyloglucan 6-xylosyltransferase 2 (XXT2) (Arabidopsis thaliana (Mouse-ear cress)).